Consider the following 770-residue polypeptide: PH and SEC7 domain-containing protein 2 (770 aa).

Basic and acidic residues predominate over residues 1–24 (MDEEKLPCELHKEGSATQEDHGLE). 2 disordered regions span residues 1–65 (MDEE…RGPD) and 181–304 (IQQR…ANGC). Positions 32-45 (QNGTAASEGLSSHI) are enriched in polar residues. The residue at position 188 (S188) is a Phosphoserine. Low complexity-rich tracts occupy residues 216–234 (LGSP…NVLS) and 285–296 (ELSSSEGLEPGS). The SEC7 domain occupies 256–459 (DDEDDEDTDK…KTLYNSIKNE (204 aa)). Residues 509–622 (TTYKHGVLTR…WILRINLVAA (114 aa)) form the PH domain. A helical membrane pass occupies residues 619-636 (LVAAIFSAPAFPAAVSSM). The stretch at 650–677 (RLCQEEQLRSHENKLRQVTAELAEHRCH) forms a coiled coil. The disordered stretch occupies residues 738–770 (PALRKTHSSPALSLGHGPVTGSKATKDTSASDT).

The protein belongs to the PSD family.

The protein resides in the cell membrane. Its subcellular location is the cell projection. It localises to the ruffle membrane. The protein localises to the cleavage furrow. The chain is PH and SEC7 domain-containing protein 2 (Psd2) from Mus musculus (Mouse).